Consider the following 98-residue polypeptide: NADH-ubiquinone oxidoreductase chain 4L (98 aa).

3 consecutive transmembrane segments (helical) span residues 1–21, 29–49, and 61–81; these read MTLIHMNVLMAFSMSLVGLLM, ALLCLEGMMLSLFTLAALTIL, and IILLVFAACEAAIGLALLVMV.

Belongs to the complex I subunit 4L family. In terms of assembly, core subunit of respiratory chain NADH dehydrogenase (Complex I) which is composed of 45 different subunits.

It is found in the mitochondrion inner membrane. It carries out the reaction a ubiquinone + NADH + 5 H(+)(in) = a ubiquinol + NAD(+) + 4 H(+)(out). Functionally, core subunit of the mitochondrial membrane respiratory chain NADH dehydrogenase (Complex I) which catalyzes electron transfer from NADH through the respiratory chain, using ubiquinone as an electron acceptor. Part of the enzyme membrane arm which is embedded in the lipid bilayer and involved in proton translocation. In Balaenoptera borealis (Sei whale), this protein is NADH-ubiquinone oxidoreductase chain 4L (MT-ND4L).